The sequence spans 569 residues: MKFIGKLLLYILIALLVAIAGLYFLLQTRWGAEHISAWVSENSDYHLAFGAMDHRFSAPSHIVLENVTFGRDGQPATLVAKSVDIALSSRQLTEPRHVDTILLENGTLNLTDQTAPLPFKADRLQLRDMAFNSPNSEWKLSAQRVNGGVVPWSPKAGKVLGTKAQIQFSAGSLSLNDVPATNVLIEGSIDNDRVTLTNLGADIARGTLTGNAQRNADGSWQVENLRMADIRLQSEKSLTDFFAPLRSVPSLQIGRLEVIDARLQGPDWAVTDLDLSLRNMTFSKDDWQTQEGKLSMNASEFIYGSLHLFDPIINTEFSPQGVALRQFTSRWEGGMVRTSGNWLRDGKTLILDDAAIAGLEYTLPKNWQQLWMETTPGWLNSLQLKRFSASRNLIIDIDPDFPWQLTALDGYGANLTLVTDHKWGVWSGSANLNAAAATFNRVDVRRPSLALTANSSTVNISELSAFTEKGILEATASVSQTPQRQTHISLNGRGVPVNILQQWGWPELPLTGDGNIQLTASGDIQANVPLKPTVSGQLHAVNAAKQQVTQTMNAGIVSSGEVTSTEPVR.

Topologically, residues 1–6 (MKFIGK) are cytoplasmic. Residues 7 to 27 (LLLYILIALLVAIAGLYFLLQ) traverse the membrane as a helical segment. Residues 28 to 569 (TRWGAEHISA…GEVTSTEPVR (542 aa)) lie on the Periplasmic side of the membrane.

It belongs to the AsmA family.

The protein localises to the cell inner membrane. In Escherichia coli (strain K12), this protein is AsmA family protein YicH (yicH).